The sequence spans 452 residues: Ketoisovalerate reductase BEA2 (452 aa).

Glycine 70–glycine 75 serves as a coordination point for NADP(+). Lysine 285 (proton donor) is an active-site residue. Asparagine 289, asparagine 293, and serine 393 together coordinate substrate. Glutamate 405 contributes to the NADP(+) binding site.

This sequence belongs to the ketopantoate reductase family.

The catalysed reaction is (R)-2-hydroxy-3-methylbutanoate + NADP(+) = 3-methyl-2-oxobutanoate + NADPH + H(+). Functionally, ketoisovalerate reductase; part of the gene cluster that mediates the biosynthesis of beauvericin (BEA), a non-ribosomal cyclic hexadepsipeptide that shows antibiotic, antifungal, insecticidal, and cancer cell antiproliferative and antihaptotactic activity. Ketoisovalerate reductase BEA2 catalyzes the NADPH-specific reduction of ketoisovaleric acid to hydroxyisovalerate, a precursor for beauvericin biosynthesis. The nonribosomal cyclodepsipeptide synthetase BEA1 then catalyzes the formation of beauvericin via condensation and cyclization of 3 dipeptidol monomers, each composed of one unit of hydroxyisovalerate and one unit of N-methyl-phenylalanine. The polypeptide is Ketoisovalerate reductase BEA2 (Gibberella fujikuroi (strain CBS 195.34 / IMI 58289 / NRRL A-6831) (Bakanae and foot rot disease fungus)).